Here is a 565-residue protein sequence, read N- to C-terminus: Urocanate hydratase (565 aa).

NAD(+)-binding positions include 58 to 59, Q136, 182 to 184, E202, R207, 245 to 246, 266 to 270, 276 to 277, and Y325; these read GG, GMG, NA, QTSAH, and YL. C413 is a catalytic residue. An NAD(+)-binding site is contributed by G495.

The protein belongs to the urocanase family. It depends on NAD(+) as a cofactor.

It is found in the cytoplasm. It carries out the reaction 4-imidazolone-5-propanoate = trans-urocanate + H2O. Its pathway is amino-acid degradation; L-histidine degradation into L-glutamate; N-formimidoyl-L-glutamate from L-histidine: step 2/3. Functionally, catalyzes the conversion of urocanate to 4-imidazolone-5-propionate. The chain is Urocanate hydratase from Vibrio vulnificus (strain YJ016).